Consider the following 879-residue polypeptide: Alanine--tRNA ligase (879 aa).

The Zn(2+) site is built by His566, His570, Cys668, and His672.

The protein belongs to the class-II aminoacyl-tRNA synthetase family. The cofactor is Zn(2+).

Its subcellular location is the cytoplasm. It carries out the reaction tRNA(Ala) + L-alanine + ATP = L-alanyl-tRNA(Ala) + AMP + diphosphate. Its function is as follows. Catalyzes the attachment of alanine to tRNA(Ala) in a two-step reaction: alanine is first activated by ATP to form Ala-AMP and then transferred to the acceptor end of tRNA(Ala). Also edits incorrectly charged Ser-tRNA(Ala) and Gly-tRNA(Ala) via its editing domain. The protein is Alanine--tRNA ligase of Clostridium beijerinckii (strain ATCC 51743 / NCIMB 8052) (Clostridium acetobutylicum).